The primary structure comprises 428 residues: D-amino acid dehydrogenase (428 aa).

3-17 (VVILGSGVVGVASAY) contacts FAD.

It belongs to the DadA oxidoreductase family. Requires FAD as cofactor.

The catalysed reaction is a D-alpha-amino acid + A + H2O = a 2-oxocarboxylate + AH2 + NH4(+). It participates in amino-acid degradation; D-alanine degradation; NH(3) and pyruvate from D-alanine: step 1/1. Oxidative deamination of D-amino acids. This chain is D-amino acid dehydrogenase, found in Burkholderia vietnamiensis (strain G4 / LMG 22486) (Burkholderia cepacia (strain R1808)).